The primary structure comprises 359 residues: N-acetyl-gamma-glutamyl-phosphate reductase (359 aa).

Cys-162 is an active-site residue.

This sequence belongs to the NAGSA dehydrogenase family. Type 1 subfamily.

The protein resides in the cytoplasm. The catalysed reaction is N-acetyl-L-glutamate 5-semialdehyde + phosphate + NADP(+) = N-acetyl-L-glutamyl 5-phosphate + NADPH + H(+). It functions in the pathway amino-acid biosynthesis; L-arginine biosynthesis; N(2)-acetyl-L-ornithine from L-glutamate: step 3/4. Catalyzes the NADPH-dependent reduction of N-acetyl-5-glutamyl phosphate to yield N-acetyl-L-glutamate 5-semialdehyde. This Prochlorococcus marinus (strain NATL1A) protein is N-acetyl-gamma-glutamyl-phosphate reductase.